The sequence spans 85 residues: Small ribosomal subunit protein bS20 (85 aa).

This sequence belongs to the bacterial ribosomal protein bS20 family.

Binds directly to 16S ribosomal RNA. The polypeptide is Small ribosomal subunit protein bS20 (Borreliella afzelii (strain PKo) (Borrelia afzelii)).